A 163-amino-acid polypeptide reads, in one-letter code: uncharacterized protein (163 aa).

This is an uncharacterized protein from Haemophilus phage HP1 (strain HP1c1) (Bacteriophage HP1).